The primary structure comprises 142 residues: Small ribosomal subunit protein bS6 (142 aa).

Residues 110–133 (NKKPSHAKEKHEKTEHTHSHHTEE) are compositionally biased toward basic and acidic residues. The disordered stretch occupies residues 110–142 (NKKPSHAKEKHEKTEHTHSHHTEEAESVGSHSE).

It belongs to the bacterial ribosomal protein bS6 family.

Its function is as follows. Binds together with bS18 to 16S ribosomal RNA. The protein is Small ribosomal subunit protein bS6 (rpsF) of Helicobacter pylori (strain ATCC 700392 / 26695) (Campylobacter pylori).